Reading from the N-terminus, the 163-residue chain is Cell division protein SepF (163 aa).

The disordered stretch occupies residues 25–53 (SVAPHSGEERESAFSRRSAERAERTERPT). The segment covering 30–51 (SGEERESAFSRRSAERAERTER) has biased composition (basic and acidic residues).

Belongs to the SepF family. As to quaternary structure, homodimer. Interacts with FtsZ.

The protein resides in the cytoplasm. Functionally, cell division protein that is part of the divisome complex and is recruited early to the Z-ring. Probably stimulates Z-ring formation, perhaps through the cross-linking of FtsZ protofilaments. Its function overlaps with FtsA. In Heliobacterium modesticaldum (strain ATCC 51547 / Ice1), this protein is Cell division protein SepF.